A 222-amino-acid polypeptide reads, in one-letter code: Protein GrpE (222 aa).

A disordered region spans residues methionine 1–leucine 64. A compositionally biased stretch (basic and acidic residues) spans glutamate 16–leucine 44. Residues glutamine 54–leucine 64 show a composition bias toward acidic residues.

It belongs to the GrpE family. As to quaternary structure, homodimer.

It is found in the cytoplasm. Functionally, participates actively in the response to hyperosmotic and heat shock by preventing the aggregation of stress-denatured proteins, in association with DnaK and GrpE. It is the nucleotide exchange factor for DnaK and may function as a thermosensor. Unfolded proteins bind initially to DnaJ; upon interaction with the DnaJ-bound protein, DnaK hydrolyzes its bound ATP, resulting in the formation of a stable complex. GrpE releases ADP from DnaK; ATP binding to DnaK triggers the release of the substrate protein, thus completing the reaction cycle. Several rounds of ATP-dependent interactions between DnaJ, DnaK and GrpE are required for fully efficient folding. This chain is Protein GrpE, found in Leifsonia xyli subsp. xyli (strain CTCB07).